Reading from the N-terminus, the 786-residue chain is ATP-dependent RNA helicase SUPV3L1, mitochondrial (786 aa).

The N-terminal 22 residues, 1-22 (MSFSRALLWARLPAGRQAGHRA), are a transit peptide targeting the mitochondrion. Lys-99 carries the post-translational modification N6-acetyllysine. The 141-residue stretch at 194 to 334 (DARAMQRKII…AIDLVMELMY (141 aa)) folds into the Helicase ATP-binding domain. 207 to 214 (GPTNSGKT) serves as a coordination point for ATP. Lys-220 is modified (N6-acetyllysine). Positions 353 to 518 (VLDHALESLD…GLHPTAEQIE (166 aa)) constitute a Helicase C-terminal domain. The interaction with LAMTOR5, important for protein stability stretch occupies residues 650 to 786 (PDASLIRDLQ…RRKKKEPDSD (137 aa)). Disordered regions lie at residues 690 to 730 (GFPS…DAGE) and 749 to 786 (KQLE…PDSD). Positions 693–705 (SGSQSRLSGTLKS) are enriched in polar residues. The residue at position 725 (Ser-725) is a Phosphoserine. Positions 749–771 (KQLEKEWMTQQTEHNKEKTESGT) are enriched in basic and acidic residues.

The protein belongs to the helicase family. In terms of assembly, homodimer; in free form. Component of the mitochondrial degradosome (mtEXO) complex which is a heteropentamer containing 2 copies of SUPV3L1 and 3 copies of PNPT1. As part of mitochondrial degradosome complex, interacts with GRSF1 in a RNA-dependent manner; the interaction enhances the activity of the complex. Interacts with LAMTOR5/HBXIP, WRN and BLM. The cofactor is Mg(2+). Mn(2+) serves as cofactor. In terms of tissue distribution, broadly expressed.

The protein resides in the nucleus. Its subcellular location is the mitochondrion matrix. The protein localises to the mitochondrion nucleoid. It catalyses the reaction ATP + H2O = ADP + phosphate + H(+). Its activity is regulated as follows. Helicase activity toward DNA substrate is inhibited by micromolar concentrations of 5,6-dichloro-1-(beta-D-ribofuranosyl)benzotriazole (DRBT) and 4,5,6,7-tetrabromobenzotriazole (TBBT). Helicase activity toward RNA substrate is inhibited by elevated concentrations of TBBT. Inhibited by some ring-expanded nucleoside analogs. Functionally, major helicase player in mitochondrial RNA metabolism. Component of the mitochondrial degradosome (mtEXO) complex, that degrades 3' overhang double-stranded RNA with a 3'-to-5' directionality in an ATP-dependent manner. Involved in the degradation of non-coding mitochondrial transcripts (MT-ncRNA) and tRNA-like molecules. ATPase and ATP-dependent multisubstrate helicase, able to unwind double-stranded (ds) DNA and RNA, and RNA/DNA heteroduplexes in the 5'-to-3' direction. Plays a role in the RNA surveillance system in mitochondria; regulates the stability of mature mRNAs, the removal of aberrantly formed mRNAs and the rapid degradation of non coding processing intermediates. Also implicated in recombination and chromatin maintenance pathways. May protect cells from apoptosis. Associates with mitochondrial DNA. In Homo sapiens (Human), this protein is ATP-dependent RNA helicase SUPV3L1, mitochondrial (SUPV3L1).